The primary structure comprises 352 residues: Heat-inducible transcription repressor HrcA (352 aa).

This sequence belongs to the HrcA family.

Functionally, negative regulator of class I heat shock genes (grpE-dnaK-dnaJ and groELS operons). Prevents heat-shock induction of these operons. The sequence is that of Heat-inducible transcription repressor HrcA from Ralstonia nicotianae (strain ATCC BAA-1114 / GMI1000) (Ralstonia solanacearum).